The primary structure comprises 416 residues: Tyrosine--tRNA ligase (416 aa).

Tyr-40 is an L-tyrosine binding site. The short motif at 45-54 is the 'HIGH' region element; the sequence is ATAASLHVGH. L-tyrosine is bound by residues Tyr-177 and Gln-181. Positions 237 to 241 match the 'KMSKS' region motif; that stretch reads KMGKS. Lys-240 is a binding site for ATP. Residues 351–416 form the S4 RNA-binding domain; sequence LSVTHFLVAA…RKKHKLVRLA (66 aa).

This sequence belongs to the class-I aminoacyl-tRNA synthetase family. TyrS type 1 subfamily. As to quaternary structure, homodimer.

It is found in the cytoplasm. It catalyses the reaction tRNA(Tyr) + L-tyrosine + ATP = L-tyrosyl-tRNA(Tyr) + AMP + diphosphate + H(+). In terms of biological role, catalyzes the attachment of tyrosine to tRNA(Tyr) in a two-step reaction: tyrosine is first activated by ATP to form Tyr-AMP and then transferred to the acceptor end of tRNA(Tyr). The protein is Tyrosine--tRNA ligase of Cereibacter sphaeroides (strain ATCC 17025 / ATH 2.4.3) (Rhodobacter sphaeroides).